The following is a 273-amino-acid chain: Translation initiation factor 2 subunit alpha (273 aa).

The S1 motif domain occupies 12–83 (GEFVVATVKN…EKGHIDLSLK (72 aa)).

This sequence belongs to the eIF-2-alpha family. As to quaternary structure, heterotrimer composed of an alpha, a beta and a gamma chain.

Its function is as follows. eIF-2 functions in the early steps of protein synthesis by forming a ternary complex with GTP and initiator tRNA. The sequence is that of Translation initiation factor 2 subunit alpha from Thermococcus gammatolerans (strain DSM 15229 / JCM 11827 / EJ3).